Here is a 257-residue protein sequence, read N- to C-terminus: Spermidine/putrescine transport system permease protein PotC (257 aa).

Residues Met1–Arg7 are Cytoplasmic-facing. A helical membrane pass occupies residues Asn8 to Thr27. Topologically, residues Asn28–Thr65 are periplasmic. In terms of domain architecture, ABC transmembrane type-1 spans Ala60–Ser248. A helical membrane pass occupies residues Ile66–Leu85. The Cytoplasmic segment spans residues Tyr86 to Leu100. The helical transmembrane segment at Phe101–Met120 threads the bilayer. At Val121 to Phe128 the chain is on the periplasmic side. The chain crosses the membrane as a helical span at residues Trp129–Phe148. The Cytoplasmic segment spans residues Ser149–Ile176. The chain crosses the membrane as a helical span at residues Ile177–Ser196. At Leu197–Asn231 the chain is on the periplasmic side. The chain crosses the membrane as a helical span at residues Ala232–Ile251. Over Thr252–His257 the chain is Cytoplasmic.

Belongs to the binding-protein-dependent transport system permease family. CysTW subfamily.

The protein localises to the cell inner membrane. Its function is as follows. Required for the activity of the bacterial periplasmic transport system of putrescine and spermidine. In Haemophilus influenzae (strain ATCC 51907 / DSM 11121 / KW20 / Rd), this protein is Spermidine/putrescine transport system permease protein PotC (potC).